Consider the following 236-residue polypeptide: Purine nucleoside phosphorylase DeoD-type (236 aa).

A purine D-ribonucleoside is bound at residue H5. Phosphate contacts are provided by residues G21, R25, R44, and 88 to 91; that span reads RVGT. Residues 180–182 and 204–205 contribute to the a purine D-ribonucleoside site; these read EME and SD. D205 serves as the catalytic Proton donor.

The protein belongs to the PNP/UDP phosphorylase family. As to quaternary structure, homohexamer; trimer of homodimers.

The enzyme catalyses a purine D-ribonucleoside + phosphate = a purine nucleobase + alpha-D-ribose 1-phosphate. The catalysed reaction is a purine 2'-deoxy-D-ribonucleoside + phosphate = a purine nucleobase + 2-deoxy-alpha-D-ribose 1-phosphate. Catalyzes the reversible phosphorolytic breakdown of the N-glycosidic bond in the beta-(deoxy)ribonucleoside molecules, with the formation of the corresponding free purine bases and pentose-1-phosphate. This chain is Purine nucleoside phosphorylase DeoD-type, found in Shewanella frigidimarina (strain NCIMB 400).